The following is a 1530-amino-acid chain: Coiled-coil domain-containing protein 141 (1530 aa).

The Spectrin repeat unit spans residues 49–127; sequence NLLEIGSSQD…SMLERRRELL (79 aa). Thr91 is modified (phosphothreonine). 3 coiled-coil regions span residues 220-251, 758-785, and 865-967; these read IDSL…VLQL, LKEK…YEEI, and AKSL…VNKK. 4 disordered regions span residues 1153 to 1240, 1259 to 1285, 1324 to 1356, and 1369 to 1403; these read SEER…PASS, LGKA…DTFT, PREV…SNVT, and SPGL…SVVS. Over residues 1334–1345 the composition is skewed to polar residues; that stretch reads PSSQAQEISLGT. The Ig-like domain occupies 1409 to 1497; the sequence is PHFSRLLSNV…GTLSSKAILH (89 aa).

In terms of assembly, interacts with DISC1. Interacts preferentially with phosphorylated forms of myosin regulatory light chain (MRLC). Interacts (via the N-terminal region) with HDAC6; inhibits the deacetylase activity of HDAC6. Interacts with KIBRA (via the C-terminal region); retains AMPAR in the cytosol after internalization. In terms of processing, ubiquitinated and degradated by the CDC20-APC/C pathway. During brain development, CDC20-APC/C complex degrades CCDC141 after centrosome translocation into the dilated area. CCDC141 is restabilized in the dilation until the centrosome enters the dilation, at which point it is once again immediately destabilized by CDC20-APC/C complex. The oscillatory regulation of CCDC141 protein is needed for proper cortical migration. Phosphorylation at Thr-91 by PLK1 affects CCDC141 degradation.

Its subcellular location is the cytoplasm. The protein resides in the cytoskeleton. It localises to the microtubule organizing center. The protein localises to the centrosome. Plays a critical role in cortical radial and GnRH neurons migration during brain development. Regulates cortical radial migration by negatively controlling the activity of histone deacetylase 6 (HDAC6) and promotes centrosome maturation. CAMDI is required for dilation formation of cortical neurons during radial migration. Plays a critical role in learning and memory performance through regulation of AMPA-selective glutamate receptors (AMPARs) cell surface expression in competition with KIBRA. The polypeptide is Coiled-coil domain-containing protein 141 (Rattus norvegicus (Rat)).